Consider the following 503-residue polypeptide: Cytochrome P450 3A9 (503 aa).

Cys442 lines the heme pocket.

Belongs to the cytochrome P450 family. Requires heme as cofactor. In terms of tissue distribution, mainly expressed in olfactory epithelium.

The protein localises to the endoplasmic reticulum membrane. Its subcellular location is the microsome membrane. It carries out the reaction an organic molecule + reduced [NADPH--hemoprotein reductase] + O2 = an alcohol + oxidized [NADPH--hemoprotein reductase] + H2O + H(+). Functionally, this isozyme seems to be implicated in olfaction. Active in the demethylation of erythromycin as well as benzphetamine. This Rattus norvegicus (Rat) protein is Cytochrome P450 3A9 (Cyp3a9).